Here is a 1027-residue protein sequence, read N- to C-terminus: Transient-receptor-potential-like protein (1027 aa).

Residues 1 to 22 (MTKEGMLSAAGRRFSRCAPSPR) form a disordered region. ANK repeat units lie at residues 85-115 (MGRT…RIGN), 117-141 (LLCA…ITRE), and 163-192 (SDIS…SIEK). Helical transmembrane passes span 355–375 (FFLY…YILM), 391–411 (FFYY…ATFE), 473–493 (FLMI…YYIF), 516–536 (VAEA…IYLF), 559–579 (FCFI…QLYW), and 640–660 (MFIM…IAMM). 2 disordered regions span residues 825 to 929 (KRDI…TYTS) and 1008 to 1027 (ENVK…NVEK). Over residues 855 to 874 (EESEEDDKSDETSSTDEEAD) the composition is skewed to acidic residues. The span at 910–923 (RASEADSKLPDRPL) shows a compositional bias: basic and acidic residues. Over residues 1008-1017 (ENVKSPSPAS) the composition is skewed to polar residues.

This sequence belongs to the transient receptor (TC 1.A.4) family. STrpC subfamily.

It localises to the membrane. In terms of biological role, could mediate calcium entry and form a calcium permeant channel. This chain is Transient-receptor-potential-like protein (trp-1), found in Caenorhabditis elegans.